Reading from the N-terminus, the 621-residue chain is Glutamyl-tRNA(Gln) amidotransferase subunit E (621 aa).

It belongs to the GatB/GatE family. GatE subfamily. As to quaternary structure, heterodimer of GatD and GatE.

The enzyme catalyses L-glutamyl-tRNA(Gln) + L-glutamine + ATP + H2O = L-glutaminyl-tRNA(Gln) + L-glutamate + ADP + phosphate + H(+). In terms of biological role, allows the formation of correctly charged Gln-tRNA(Gln) through the transamidation of misacylated Glu-tRNA(Gln) in organisms which lack glutaminyl-tRNA synthetase. The reaction takes place in the presence of glutamine and ATP through an activated gamma-phospho-Glu-tRNA(Gln). The GatDE system is specific for glutamate and does not act on aspartate. This Methanobrevibacter smithii (strain ATCC 35061 / DSM 861 / OCM 144 / PS) protein is Glutamyl-tRNA(Gln) amidotransferase subunit E.